Reading from the N-terminus, the 178-residue chain is Large ribosomal subunit protein uL6 (178 aa).

The protein belongs to the universal ribosomal protein uL6 family. As to quaternary structure, part of the 50S ribosomal subunit.

Functionally, this protein binds to the 23S rRNA, and is important in its secondary structure. It is located near the subunit interface in the base of the L7/L12 stalk, and near the tRNA binding site of the peptidyltransferase center. The sequence is that of Large ribosomal subunit protein uL6 from Listeria monocytogenes serotype 4a (strain HCC23).